We begin with the raw amino-acid sequence, 193 residues long: Frataxin, mitochondrial (193 aa).

The transit peptide at M1–F72 directs the protein to the mitochondrion.

Belongs to the frataxin family. As to quaternary structure, monomer. Oligomer.

It is found in the mitochondrion. It catalyses the reaction 4 Fe(2+) + O2 + 4 H(+) = 4 Fe(3+) + 2 H2O. Promotes the biosynthesis of heme as well as the assembly and repair of iron-sulfur clusters by delivering Fe(2+) to proteins involved in these pathways. May play a role in the protection against iron-catalyzed oxidative stress through its ability to catalyze the oxidation of Fe(2+) to Fe(3+). May be able to store large amounts of the metal in the form of a ferrihydrite mineral by oligomerization. The protein is Frataxin, mitochondrial (fxn) of Dictyostelium discoideum (Social amoeba).